A 184-amino-acid polypeptide reads, in one-letter code: Fungal defensin copsin (184 aa).

The signal sequence occupies residues 1 to 23 (MKLSTSLLAIVAVASTFIGNALS). The propeptide occupies 24-127 (ATTVPGCFAE…LGRVLPVEKR (104 aa)). Position 128 is a pyrrolidone carboxylic acid (Q128). Cystine bridges form between C130–C159, C137–C167, C145–C175, C149–C177, C152–C184, and C162–C181.

This sequence belongs to the invertebrate defensin family. In terms of processing, contains a unique connectivity of 6 cysteine bonds in contrast to most other CS-alpha-beta defensins which are linked by 3 or 4 disulfide bonds. Disulfide bonds are essential for structural integrity and antibacterial activity, since activity is lost after treatment with reducing agents. Thanks to disulfide bonds and N-terminal pyroglutamate, the protein is extremely stable in a wide pH and temperature range and insensitive toward proteases.

Its subcellular location is the secreted. The protein resides in the target cell membrane. Antimicrobial peptide that acts against Gram-positive bacteria (Listeria spp., Enterococcus spp., B.subtilis, B.anthracis, P.aeruginosa). Is not active against Gram-negative bacteria. It selectively inhibits peptidoglycan biosynthesis through complex formation with the cell wall precursor lipid II (1:1 molar ratio), probably anchoring lipid II to the membrane, thus inhibiting cell wall synthesis. The interaction with lipid II involves the third position of the pentapeptide. Shows bactericidal activity at about 2-fold minimal inhibitory concentrations (MIC), but does not form pore across the membrane. This chain is Fungal defensin copsin, found in Coprinopsis cinerea (Inky cap fungus).